The following is a 484-amino-acid chain: Aldehyde dehydrogenase family 3 member F1 (484 aa).

192–197 is an NAD(+) binding site; the sequence is GSPKIG. Glu-214 acts as the Proton acceptor in catalysis. The active-site Nucleophile is the Cys-252.

The protein belongs to the aldehyde dehydrogenase family. As to quaternary structure, homotetramer. In terms of tissue distribution, constituively expressed at low levels.

It catalyses the reaction an aldehyde + NAD(+) + H2O = a carboxylate + NADH + 2 H(+). This is Aldehyde dehydrogenase family 3 member F1 (ALDH3F1) from Arabidopsis thaliana (Mouse-ear cress).